A 357-amino-acid polypeptide reads, in one-letter code: 3-isopropylmalate dehydrogenase (357 aa).

R97, R107, R135, and D224 together coordinate substrate. Positions 224, 248, and 252 each coordinate Mg(2+). 282–294 (GSAPDIAGQDLAN) contributes to the NAD(+) binding site.

This sequence belongs to the isocitrate and isopropylmalate dehydrogenases family. LeuB type 1 subfamily. Homodimer. The cofactor is Mg(2+). Mn(2+) serves as cofactor.

It is found in the cytoplasm. The catalysed reaction is (2R,3S)-3-isopropylmalate + NAD(+) = 4-methyl-2-oxopentanoate + CO2 + NADH. The protein operates within amino-acid biosynthesis; L-leucine biosynthesis; L-leucine from 3-methyl-2-oxobutanoate: step 3/4. Its function is as follows. Catalyzes the oxidation of 3-carboxy-2-hydroxy-4-methylpentanoate (3-isopropylmalate) to 3-carboxy-4-methyl-2-oxopentanoate. The product decarboxylates to 4-methyl-2 oxopentanoate. The polypeptide is 3-isopropylmalate dehydrogenase (Prochlorococcus marinus (strain MIT 9313)).